The primary structure comprises 275 residues: Glutamate 5-kinase (275 aa).

Lysine 17 lines the ATP pocket. Serine 57, aspartate 144, and asparagine 160 together coordinate substrate. Residues 180 to 181 (SD) and 222 to 228 (TGGMLSK) each bind ATP.

It belongs to the glutamate 5-kinase family.

It localises to the cytoplasm. The enzyme catalyses L-glutamate + ATP = L-glutamyl 5-phosphate + ADP. Its pathway is amino-acid biosynthesis; L-proline biosynthesis; L-glutamate 5-semialdehyde from L-glutamate: step 1/2. Catalyzes the transfer of a phosphate group to glutamate to form L-glutamate 5-phosphate. The sequence is that of Glutamate 5-kinase from Streptococcus pyogenes serotype M12 (strain MGAS2096).